Consider the following 869-residue polypeptide: Speckle targeted PIP5K1A-regulated poly(A) polymerase (869 aa).

The Matrin-type zinc-finger motif lies at 16–46 (FRCCLCDVTTANRPSLDAHLKGRKHRDLVQL). The RRM domain occupies 56 to 128 (RSVFVSGFPR…HGLRVRPREQ (73 aa)). Positions 114-144 (HSLGGHGLRVRPREQKEFQSPASKSPKGVDS) are disordered. S205 provides a ligand contact to ATP. Mg(2+) contacts are provided by D216 and D218. The UTP site is built by D216 and D218. Disordered regions lie at residues 226 to 247 (MEET…LDSA) and 259 to 335 (CTPA…ASKD). Composition is skewed to polar residues over residues 266-276 (DSLSPTSVQES) and 283-299 (TPSS…LGSD). A compositionally biased stretch (basic and acidic residues) spans 314–335 (QEDRKEGKQGKELELAEEASKD). N395 is an ATP binding site. Residues N395, R417, Y435, and H552 each coordinate UTP. The 59-residue stretch at 494–552 (LSSLLAQFFSCVSCLDLSGSLLSLREGRPLMVAEGLPSDLWEGLRLGPMNLQDPFDLSH) folds into the PAP-associated domain. The segment at 601–869 (SSPSSLLSAK…IPQALKNLLK (269 aa)) is KA1; binds the bulging loops of U6 snRNA but is dispensable for terminal uridylyltransferase activity. 4 disordered regions span residues 640 to 689 (QGTK…DHSE), 735 to 757 (MKPE…HPSS), 775 to 796 (ARRR…TGAE), and 803 to 822 (RVTQ…PGEP). The segment covering 671–689 (KSFEEGKEEPQGCAGDHSE) has biased composition (basic and acidic residues). Residues S688 and S744 each carry the phosphoserine modification.

The protein belongs to the DNA polymerase type-B-like family. In terms of assembly, associates with the cleavage and polyadenylation specificity factor (CPSF) complex. Interacts with CPSF1 and CPSF3; the interaction is direct. Interacts with PIP5K1A. Requires Mg(2+) as cofactor. The cofactor is Mn(2+). Post-translationally, phosphorylated by CK1 in the proline-rich (Pro-rich) region.

It localises to the nucleus. It is found in the nucleolus. Its subcellular location is the nucleus speckle. The catalysed reaction is RNA(n) + UTP = RNA(n)-3'-uridine ribonucleotide + diphosphate. The enzyme catalyses RNA(n) + ATP = RNA(n)-3'-adenine ribonucleotide + diphosphate. Adenylyltransferase activity is specifically phosphatidylinositol 4,5-bisphosphate (PtdIns(4,5)P2). Its function is as follows. Poly(A) polymerase that creates the 3'-poly(A) tail of specific pre-mRNAs. Localizes to nuclear speckles together with PIP5K1A and mediates polyadenylation of a select set of mRNAs, such as HMOX1. In addition to polyadenylation, it is also required for the 3'-end cleavage of pre-mRNAs: binds to the 3'UTR of targeted pre-mRNAs and promotes the recruitment and assembly of the CPSF complex on the 3'UTR of pre-mRNAs. In addition to adenylyltransferase activity, also has uridylyltransferase activity. However, the ATP ratio is higher than UTP in cells, suggesting that it functions primarily as a poly(A) polymerase. Acts as a specific terminal uridylyltransferase for U6 snRNA in vitro: responsible for a controlled elongation reaction that results in the restoration of the four 3'-terminal UMP-residues found in newly transcribed U6 snRNA. Not involved in replication-dependent histone mRNA degradation. The sequence is that of Speckle targeted PIP5K1A-regulated poly(A) polymerase (Tut1) from Mus musculus (Mouse).